The following is a 551-amino-acid chain: Palmdelphin (551 aa).

An N-acetylmethionine modification is found at methionine 1. Residues 2–106 (EEAELVKERL…LQISTNEEAI (105 aa)) are a coiled coil. A Glycyl lysine isopeptide (Lys-Gly) (interchain with G-Cter in SUMO2) cross-link involves residue lysine 125. Position 135 is a phosphoserine (serine 135). Residue lysine 179 forms a Glycyl lysine isopeptide (Lys-Gly) (interchain with G-Cter in SUMO1); alternate linkage. Lysine 179 participates in a covalent cross-link: Glycyl lysine isopeptide (Lys-Gly) (interchain with G-Cter in SUMO2); alternate. Positions 247 to 259 (SERNSKSPTEYHD) are enriched in basic and acidic residues. 2 disordered regions span residues 247 to 393 (SERN…EDEE) and 450 to 529 (EEEE…IAGD). Phosphothreonine is present on threonine 271. Serine 321, serine 370, serine 384, and serine 385 each carry phosphoserine. Positions 484–495 (KRAEVNPHENTN) are enriched in basic and acidic residues. 3 positions are modified to phosphoserine: serine 498, serine 515, and serine 520.

Belongs to the paralemmin family. Interacts with GLUL. Cell projection, dendrite. Cell projection, dendritic spine. Post-translationally, phosphorylated.

The protein localises to the cytoplasm. It localises to the cell projection. Its subcellular location is the dendrite. It is found in the dendritic spine. The sequence is that of Palmdelphin (PALMD) from Sus scrofa (Pig).